Consider the following 127-residue polypeptide: uncharacterized protein (127 aa).

The interval 1–24 (PLKTKPIDNNLPHRTGYNQASKQQ) is disordered.

This is an uncharacterized protein from Homo sapiens (Human).